Here is a 347-residue protein sequence, read N- to C-terminus: NADH-ubiquinone oxidoreductase chain 2 (347 aa).

Helical transmembrane passes span 3 to 23 (PPILIIIMATIMTGTMIVMLS), 25 to 45 (HWLLIWIGFEMNMLAIIPILM), 66 to 86 (ASMLLMMGVTINLLYSGQWVI), 111 to 131 (FHFWVPEVTQGITLMSGMILL), 149 to 169 (INTNLLMLMALTSVLVGGWGG), 178 to 198 (IMAYSSIAHMGWMAAIITYNP), 201 to 221 (MVLNLTLYILMTLSTFMLFML), 237 to 257 (FPLITSMILILMLSLGGLPPL), 274 to 294 (NMIIIPTLMAITALLNLYFYL), and 325 to 345 (LLPPLIITSTMLLPLTPMLSV).

It belongs to the complex I subunit 2 family. As to quaternary structure, core subunit of respiratory chain NADH dehydrogenase (Complex I) which is composed of 45 different subunits. Interacts with TMEM242.

The protein localises to the mitochondrion inner membrane. The catalysed reaction is a ubiquinone + NADH + 5 H(+)(in) = a ubiquinol + NAD(+) + 4 H(+)(out). Functionally, core subunit of the mitochondrial membrane respiratory chain NADH dehydrogenase (Complex I) which catalyzes electron transfer from NADH through the respiratory chain, using ubiquinone as an electron acceptor. Essential for the catalytic activity and assembly of complex I. The protein is NADH-ubiquinone oxidoreductase chain 2 of Canis lupus familiaris (Dog).